Here is a 482-residue protein sequence, read N- to C-terminus: Glycogen synthase (482 aa).

ADP-alpha-D-glucose is bound at residue Lys-15.

The protein belongs to the glycosyltransferase 1 family. Bacterial/plant glycogen synthase subfamily.

The enzyme catalyses [(1-&gt;4)-alpha-D-glucosyl](n) + ADP-alpha-D-glucose = [(1-&gt;4)-alpha-D-glucosyl](n+1) + ADP + H(+). Its pathway is glycan biosynthesis; glycogen biosynthesis. In terms of biological role, synthesizes alpha-1,4-glucan chains using ADP-glucose. The protein is Glycogen synthase of Elusimicrobium minutum (strain Pei191).